The sequence spans 513 residues: Bifunctional purine biosynthesis protein PurH (513 aa).

The MGS-like domain maps to 1-146; the sequence is MPRFALLSVS…KNHAHLTILT (146 aa).

Belongs to the PurH family.

The enzyme catalyses (6R)-10-formyltetrahydrofolate + 5-amino-1-(5-phospho-beta-D-ribosyl)imidazole-4-carboxamide = 5-formamido-1-(5-phospho-D-ribosyl)imidazole-4-carboxamide + (6S)-5,6,7,8-tetrahydrofolate. It carries out the reaction IMP + H2O = 5-formamido-1-(5-phospho-D-ribosyl)imidazole-4-carboxamide. It participates in purine metabolism; IMP biosynthesis via de novo pathway; 5-formamido-1-(5-phospho-D-ribosyl)imidazole-4-carboxamide from 5-amino-1-(5-phospho-D-ribosyl)imidazole-4-carboxamide (10-formyl THF route): step 1/1. Its pathway is purine metabolism; IMP biosynthesis via de novo pathway; IMP from 5-formamido-1-(5-phospho-D-ribosyl)imidazole-4-carboxamide: step 1/1. The chain is Bifunctional purine biosynthesis protein PurH from Synechococcus elongatus (strain ATCC 33912 / PCC 7942 / FACHB-805) (Anacystis nidulans R2).